The chain runs to 232 residues: Anthranilate synthase component 2 (232 aa).

The Glutamine amidotransferase type-1 domain occupies 2-198; the sequence is RILVVDNYDS…LTCCGWTQDD (197 aa). 55–57 contacts L-glutamine; it reads GPG. The Nucleophile; for GATase activity role is filled by cysteine 83. L-glutamine-binding positions include glutamine 87 and 133 to 134; that span reads SL. Residues histidine 172 and glutamate 174 each act as for GATase activity in the active site.

Heterotetramer consisting of two non-identical subunits: a beta subunit (TrpG) and a large alpha subunit (TrpE).

It carries out the reaction chorismate + L-glutamine = anthranilate + pyruvate + L-glutamate + H(+). The protein operates within amino-acid biosynthesis; L-tryptophan biosynthesis; L-tryptophan from chorismate: step 1/5. Functionally, part of a heterotetrameric complex that catalyzes the two-step biosynthesis of anthranilate, an intermediate in the biosynthesis of L-tryptophan. In the first step, the glutamine-binding beta subunit (TrpG) of anthranilate synthase (AS) provides the glutamine amidotransferase activity which generates ammonia as a substrate that, along with chorismate, is used in the second step, catalyzed by the large alpha subunit of AS (TrpE) to produce anthranilate. In the absence of TrpG, TrpE can synthesize anthranilate directly from chorismate and high concentrations of ammonia. The protein is Anthranilate synthase component 2 (trpG) of Mycobacterium tuberculosis (strain CDC 1551 / Oshkosh).